The primary structure comprises 302 residues: Glutaminase (302 aa).

Substrate is bound by residues Ser61, Asn111, Glu155, Asn162, Tyr186, Tyr238, and Val256.

This sequence belongs to the glutaminase family. Homotetramer.

It catalyses the reaction L-glutamine + H2O = L-glutamate + NH4(+). The sequence is that of Glutaminase from Pseudomonas fluorescens (strain ATCC BAA-477 / NRRL B-23932 / Pf-5).